The following is a 212-amino-acid chain: Glycerol-3-phosphate acyltransferase (212 aa).

Transmembrane regions (helical) follow at residues 3–23, 51–71, 78–98, 115–135, and 139–159; these read ILLAALVAYLIGSVSFAVVVS, KAAILTLVGDAFKGWLAVWLA, DVAVAWVAIAVFLGHLYPVFF, AVHPVLGLATALTWLIVAFFF, and SLAALVAAVFAPLFDVFLFGT.

It belongs to the PlsY family. As to quaternary structure, probably interacts with PlsX.

Its subcellular location is the cell inner membrane. The enzyme catalyses an acyl phosphate + sn-glycerol 3-phosphate = a 1-acyl-sn-glycero-3-phosphate + phosphate. It functions in the pathway lipid metabolism; phospholipid metabolism. Its function is as follows. Catalyzes the transfer of an acyl group from acyl-phosphate (acyl-PO(4)) to glycerol-3-phosphate (G3P) to form lysophosphatidic acid (LPA). This enzyme utilizes acyl-phosphate as fatty acyl donor, but not acyl-CoA or acyl-ACP. The polypeptide is Glycerol-3-phosphate acyltransferase (Burkholderia ambifaria (strain MC40-6)).